Consider the following 172-residue polypeptide: Protein-export protein SecB (172 aa).

It belongs to the SecB family. In terms of assembly, homotetramer, a dimer of dimers. One homotetramer interacts with 1 SecA dimer.

It localises to the cytoplasm. Its function is as follows. One of the proteins required for the normal export of preproteins out of the cell cytoplasm. It is a molecular chaperone that binds to a subset of precursor proteins, maintaining them in a translocation-competent state. It also specifically binds to its receptor SecA. The polypeptide is Protein-export protein SecB (Maricaulis maris (strain MCS10) (Caulobacter maris)).